Reading from the N-terminus, the 280-residue chain is F-actin-capping protein subunit alpha (280 aa).

The protein belongs to the F-actin-capping protein alpha subunit family. As to quaternary structure, heterodimer of an alpha and a beta subunit.

The protein localises to the cytoplasm. Its subcellular location is the cytoskeleton. F-actin-capping proteins bind in a Ca(2+)-independent manner to the fast growing ends of actin filaments (barbed end) thereby blocking the exchange of subunits at these ends. Unlike other capping proteins (such as gelsolin and severin), these proteins do not sever actin filaments. This chain is F-actin-capping protein subunit alpha (CAP01), found in Candida albicans (strain SC5314 / ATCC MYA-2876) (Yeast).